Reading from the N-terminus, the 497-residue chain is 4,4'-diaponeurosporene oxygenase (497 aa).

7–19 (VIGGGLGGISAAI) contributes to the FAD binding site.

It belongs to the carotenoid/retinoid oxidoreductase family. CrtP subfamily. FAD serves as cofactor.

It catalyses the reaction all-trans-4,4'-diaponeurosporene + 2 AH2 + 2 O2 = 4,4'-diaponeurosporenal + 2 A + 3 H2O. Its pathway is carotenoid biosynthesis; staphyloxanthin biosynthesis; staphyloxanthin from farnesyl diphosphate: step 3/5. Its function is as follows. Involved in the biosynthesis of the yellow-orange carotenoid staphyloxanthin, which plays a role in the virulence via its protective function against oxidative stress. Catalyzes the oxidation of the terminal methyl side group of 4,4'-diaponeurosporene to form 4,4'-diaponeurosporen-4-al. The chain is 4,4'-diaponeurosporene oxygenase from Staphylococcus aureus (strain MRSA252).